The primary structure comprises 361 residues: 4-hydroxytryptamine kinase (361 aa).

Residues Asn-37, Lys-57, and 118-120 (QDV) each bind ATP. Asp-224 is a catalytic residue. Residue 248 to 250 (DWE) participates in ATP binding.

This sequence belongs to the methylthioribose kinase family. In terms of assembly, monomer. Mg(2+) serves as cofactor.

The enzyme catalyses 4-hydroxytryptamine + ATP = norbaeocystin + ADP + H(+). The catalysed reaction is psilocin + ATP = psilocybin + ADP + H(+). It carries out the reaction 4-hydroxy-N,N,N-trimethyltryptamine + ATP = aeruginascin + ADP + H(+). The protein operates within secondary metabolite biosynthesis. Functionally, 4-hydroxytryptamine kinase; part of the gene cluster that mediates the biosynthesis of psilocybin, a psychotropic tryptamine-derived natural product. The first step in the pathway is the decarboxylation of L-tryptophan to tryptamine by the decarboxylase psiD. PsiD does not decarboxylate phenylalanine, tyrosine, or 5-hydroxy- L -tryptophan (5-HTP). 4-hydroxy-L-tryptophan is accepted as substrate by psiD as well. The cytochrome P450 monooxygenase psiH then converts tryptamine to 4-hydroxytryptamine. The kinase psiK catalyzes the 4-O-phosphorylation step by converting 4-hydroxytryptamine into norbaeocystin. The methyltransferase psiM then catalyzes iterative methyl transfer to the amino group of norbaeocystin to yield psilocybin via a monomethylated intermediate, baeocystin. 4-hydroxy-6-methyl-l-tryptophancan also be converted the decarboxylase PsiD, kinase PsiK, and methyltransferase PsiM into respectively 6-methyl-norbaeocystin, 6-methylbaeocystin, and 6-methylpsilocybin. PsiK kinase can also turn psilocin into psilocybin. This activity may represent a protective mechanism to rephosphorylate the unstable psilocin to the stable psilocybin in case of intracellular ester cleavage. Moreover, psiK is able to O-phosphorylate the quaternary amine 4-hydroxy-N,N,N-trimethyltryptamine (4-OH-TMT) to yield aeruginascin, another bioactive compound found in Psilocybe species. The chain is 4-hydroxytryptamine kinase from Psilocybe cyanescens.